The chain runs to 370 residues: ATP/GTP phosphatase (370 aa).

It carries out the reaction ATP + H2O = ADP + phosphate + H(+). The enzyme catalyses GTP + H2O = GDP + phosphate + H(+). Functionally, has nucleotide phosphatase activity toward ATP and GTP, but not toward CTP, TTP and ADP. This Helicobacter pylori (strain ATCC 700392 / 26695) (Campylobacter pylori) protein is ATP/GTP phosphatase.